The following is a 574-amino-acid chain: Calcium-dependent protein kinase 9 (574 aa).

The disordered stretch occupies residues 1-64 (MGNTCCVAPA…RARAKPNPYD (64 aa)). A lipid anchor (N-myristoyl glycine) is attached at Gly-2. A compositionally biased stretch (low complexity) spans 28-40 (KSPAPSATTTTAT). Residues 101–359 (YQLGRELGRG…AQQVLDHPWL (259 aa)) enclose the Protein kinase domain. Residues 107-115 (LGRGEFGVT) and Lys-130 contribute to the ATP site. Asp-225 serves as the catalytic Proton acceptor. The interval 365 to 395 (APNVPLGDVVRARLKQFSLMNRLKKKAMRVI) is autoinhibitory domain. EF-hand domains follow at residues 402-437 (EEVEVIKDMFALMDTDNNGRVTLQELKDGLTKVGSK), 438-473 (LAEPEMELLMEAADVDGNGYLDYGEFVAVTIHLQRL), 474-509 (SNDNHLRTAFLFFDKDGSGYIDRAELADALADDSGH), and 510-545 (ADDAVLDHILREVDTDKDGRISYEEFVAMMKSGTDW). Positions 415, 417, 419, 421, 426, 451, 453, 455, 457, 462, 487, 489, 491, 493, 498, 523, 525, 527, 529, and 534 each coordinate Ca(2+).

It belongs to the protein kinase superfamily. Ser/Thr protein kinase family. CDPK subfamily. In terms of tissue distribution, expressed in leaf blades and stems. Expressed at low levels in anthers and spikelets.

It is found in the membrane. It carries out the reaction L-seryl-[protein] + ATP = O-phospho-L-seryl-[protein] + ADP + H(+). The catalysed reaction is L-threonyl-[protein] + ATP = O-phospho-L-threonyl-[protein] + ADP + H(+). Its activity is regulated as follows. Activated by calcium. Autophosphorylation may play an important role in the regulation of the kinase activity. Its function is as follows. May play a role in signal transduction pathways that involve calcium as a second messenger. Functions in signal transduction pathways that positively regulate responses to drought, osmotic, and dehydration stress. Regulates expression of stress-associated genes in response to drought. Involved in tolerance to drought stress by increasing proline and soluble sugars, and improving stomatal closure. Required for pollen maturation and spikelet fertility. The chain is Calcium-dependent protein kinase 9 from Oryza sativa subsp. japonica (Rice).